Here is a 102-residue protein sequence, read N- to C-terminus: DET1- and DDB1-associated protein 1 (102 aa).

Alanine 2 is subject to N-acetylalanine. 2 positions are modified to phosphoserine: serine 33 and serine 95. Residues 67 to 102 form a disordered region; it reads NAAKKRDQEQVEAEGESSAPPRKVARTDSPDMPEDT.

It belongs to the DDA1 family. As to quaternary structure, component of numerous DCX (DDB1-CUL4-X-box) E3 ubiquitin-protein ligase complexes which consist of a core of DDB1, cullin-4 (CUL4A or CUL4B), DDA1 and RBX1. Component of the DCX(DCAF15) complex, also named CLR4(DCAF15) complex, composed of DCAF15, DDB1, cullin-4 (CUL4A or CUL4B), DDA1 and RBX1. Part of the DDD core complex containing DET1, DDA1 and DDB1; the DDD core complex recruits a specific UBE2E enzyme, such as UBE2E1, UBE2E2 UBE2E3, to form specific DDD-E2 complexes.

It functions in the pathway protein modification; protein ubiquitination. In terms of biological role, functions as a component of numerous distinct DCX (DDB1-CUL4-X-box) E3 ubiquitin-protein ligase complexes which mediate the ubiquitination and subsequent proteasomal degradation of target proteins. In the DCX complexes, acts as a scaffolding subunit required to stabilize the complex. The polypeptide is DET1- and DDB1-associated protein 1 (Mus musculus (Mouse)).